The sequence spans 296 residues: Phosphatidylserine decarboxylase proenzyme (296 aa).

Residues D113, H169, and S256 each act as charge relay system; for autoendoproteolytic cleavage activity in the active site. Residue S256 is the Schiff-base intermediate with substrate; via pyruvic acid; for decarboxylase activity of the active site. Pyruvic acid (Ser); by autocatalysis is present on S256.

Belongs to the phosphatidylserine decarboxylase family. PSD-B subfamily. Prokaryotic type II sub-subfamily. In terms of assembly, heterodimer of a large membrane-associated beta subunit and a small pyruvoyl-containing alpha subunit. It depends on pyruvate as a cofactor. Post-translationally, is synthesized initially as an inactive proenzyme. Formation of the active enzyme involves a self-maturation process in which the active site pyruvoyl group is generated from an internal serine residue via an autocatalytic post-translational modification. Two non-identical subunits are generated from the proenzyme in this reaction, and the pyruvate is formed at the N-terminus of the alpha chain, which is derived from the carboxyl end of the proenzyme. The autoendoproteolytic cleavage occurs by a canonical serine protease mechanism, in which the side chain hydroxyl group of the serine supplies its oxygen atom to form the C-terminus of the beta chain, while the remainder of the serine residue undergoes an oxidative deamination to produce ammonia and the pyruvoyl prosthetic group on the alpha chain. During this reaction, the Ser that is part of the protease active site of the proenzyme becomes the pyruvoyl prosthetic group, which constitutes an essential element of the active site of the mature decarboxylase.

It is found in the cell membrane. It carries out the reaction a 1,2-diacyl-sn-glycero-3-phospho-L-serine + H(+) = a 1,2-diacyl-sn-glycero-3-phosphoethanolamine + CO2. The protein operates within phospholipid metabolism; phosphatidylethanolamine biosynthesis; phosphatidylethanolamine from CDP-diacylglycerol: step 2/2. Its function is as follows. Catalyzes the formation of phosphatidylethanolamine (PtdEtn) from phosphatidylserine (PtdSer). This Clostridium botulinum (strain Eklund 17B / Type B) protein is Phosphatidylserine decarboxylase proenzyme.